Here is a 1049-residue protein sequence, read N- to C-terminus: Multiple C2 domain and transmembrane region protein 16 (1049 aa).

One can recognise a C2 1 domain in the interval 1-112; it reads MATTRKLVVE…VGQGEEALIY (112 aa). The interval 136–249 is disordered; that stretch reads DEKPPPLKPT…PPQNQPDGED (114 aa). Basic and acidic residues-rich tracts occupy residues 153–170 and 226–238; these read VEEK…ESKP and ESDK…KPVE. C2 domains are found at residues 302-426, 460-582, and 617-745; these read TSEI…PQWY, TAGN…SRWL, and VCSD…RNTY. Ser-338, Asp-390, Thr-393, and Ser-398 together coordinate Ca(2+). A run of 2 helical transmembrane segments spans residues 883–903 and 989–1009; these read VMLI…LFVI and ATGI…LVPT.

Belongs to the MCTP family. Ca(2+) is required as a cofactor. In terms of tissue distribution, expressed in the vascular tissues of roots, cotyledons and rosette leaves. Accumulates in roots meristems and shoot apical meristems (SAMs). Observed in flowers.

The protein localises to the endoplasmic reticulum membrane. In terms of biological role, may function as a signaling molecule by regulating the trafficking of other regulators. The polypeptide is Multiple C2 domain and transmembrane region protein 16 (Arabidopsis thaliana (Mouse-ear cress)).